The following is a 215-amino-acid chain: Peptide methionine sulfoxide reductase MsrA (215 aa).

The active site involves C58.

This sequence belongs to the MsrA Met sulfoxide reductase family.

It catalyses the reaction L-methionyl-[protein] + [thioredoxin]-disulfide + H2O = L-methionyl-(S)-S-oxide-[protein] + [thioredoxin]-dithiol. The catalysed reaction is [thioredoxin]-disulfide + L-methionine + H2O = L-methionine (S)-S-oxide + [thioredoxin]-dithiol. Has an important function as a repair enzyme for proteins that have been inactivated by oxidation. Catalyzes the reversible oxidation-reduction of methionine sulfoxide in proteins to methionine. In Pseudomonas savastanoi pv. phaseolicola (strain 1448A / Race 6) (Pseudomonas syringae pv. phaseolicola (strain 1448A / Race 6)), this protein is Peptide methionine sulfoxide reductase MsrA.